We begin with the raw amino-acid sequence, 445 residues long: UPF0210 protein LACR_1020 (445 aa).

This sequence belongs to the UPF0210 family. In terms of assembly, homodimer.

This is UPF0210 protein LACR_1020 from Lactococcus lactis subsp. cremoris (strain SK11).